A 294-amino-acid chain; its full sequence is Cytidine deaminase (294 aa).

2 CMP/dCMP-type deaminase domains span residues 48–168 (DDDA…FGPR) and 186–294 (LKGD…VTLA). 89 to 91 (NME) provides a ligand contact to substrate. Residue His-102 coordinates Zn(2+). Glu-104 functions as the Proton donor in the catalytic mechanism. Zn(2+)-binding residues include Cys-129 and Cys-132.

This sequence belongs to the cytidine and deoxycytidylate deaminase family. In terms of assembly, homodimer. It depends on Zn(2+) as a cofactor.

The catalysed reaction is cytidine + H2O + H(+) = uridine + NH4(+). It carries out the reaction 2'-deoxycytidine + H2O + H(+) = 2'-deoxyuridine + NH4(+). In terms of biological role, this enzyme scavenges exogenous and endogenous cytidine and 2'-deoxycytidine for UMP synthesis. This chain is Cytidine deaminase, found in Cronobacter sakazakii (strain ATCC BAA-894) (Enterobacter sakazakii).